We begin with the raw amino-acid sequence, 184 residues long: ATP synthase subunit b, chloroplastic (184 aa).

Residues 27 to 49 traverse the membrane as a helical segment; sequence LATNLINLSVVLGVLIFFGKGVL.

This sequence belongs to the ATPase B chain family. In terms of assembly, F-type ATPases have 2 components, F(1) - the catalytic core - and F(0) - the membrane proton channel. F(1) has five subunits: alpha(3), beta(3), gamma(1), delta(1), epsilon(1). F(0) has four main subunits: a(1), b(1), b'(1) and c(10-14). The alpha and beta chains form an alternating ring which encloses part of the gamma chain. F(1) is attached to F(0) by a central stalk formed by the gamma and epsilon chains, while a peripheral stalk is formed by the delta, b and b' chains.

It is found in the plastid. Its subcellular location is the chloroplast thylakoid membrane. In terms of biological role, f(1)F(0) ATP synthase produces ATP from ADP in the presence of a proton or sodium gradient. F-type ATPases consist of two structural domains, F(1) containing the extramembraneous catalytic core and F(0) containing the membrane proton channel, linked together by a central stalk and a peripheral stalk. During catalysis, ATP synthesis in the catalytic domain of F(1) is coupled via a rotary mechanism of the central stalk subunits to proton translocation. Component of the F(0) channel, it forms part of the peripheral stalk, linking F(1) to F(0). The chain is ATP synthase subunit b, chloroplastic from Helianthus annuus (Common sunflower).